Reading from the N-terminus, the 360-residue chain is Decorin (360 aa).

The signal sequence occupies residues 1 to 16 (MKATIIFLLLAQVSWA). A propeptide spanning residues 17 to 30 (GPFQQRGLFDFMLE) is cleaved from the precursor. The O-linked (Xyl...) (glycosaminoglycan) serine glycan is linked to serine 34. Disulfide bonds link cysteine 55–cysteine 61 and cysteine 59–cysteine 68. 12 LRR repeats span residues 74-94 (DKVP…NNKI), 95-118 (TEIK…NNKI), 119-142 (SKIS…KNHL), 143-163 (KELP…ENEI), 164-187 (TKVR…TNPL), 188-213 (KSSG…DTNI), 214-234 (TTIP…GNKI), 235-258 (TKVD…FNSI), 259-282 (SAVD…NNKL), 283-305 (IRVP…NNNI), 306-335 (SAVG…SNPV), and 336-360 (QYWE…GNYK). N-linked (GlcNAc...) asparagine glycosylation is present at asparagine 212. Residues asparagine 263 and asparagine 304 are each glycosylated (N-linked (GlcNAc...) asparagine). A disulfide bridge connects residues cysteine 314 and cysteine 347.

It belongs to the small leucine-rich proteoglycan (SLRP) family. SLRP class I subfamily. Binds to type I and type II collagen, fibronectin and TGF-beta. Forms a ternary complex with MFAP2 and ELN. Interacts with DPT. Post-translationally, the attached glycosaminoglycan chain can be either chondroitin sulfate or dermatan sulfate depending upon the tissue of origin.

The protein resides in the secreted. The protein localises to the extracellular space. It is found in the extracellular matrix. In terms of biological role, may affect the rate of fibrils formation. The polypeptide is Decorin (DCN) (Canis lupus familiaris (Dog)).